Here is a 310-residue protein sequence, read N- to C-terminus: Glutaminase (310 aa).

7 residues coordinate substrate: serine 67, asparagine 118, glutamate 161, asparagine 168, tyrosine 192, tyrosine 244, and valine 262.

The protein belongs to the glutaminase family. In terms of assembly, homotetramer.

The enzyme catalyses L-glutamine + H2O = L-glutamate + NH4(+). This Legionella pneumophila (strain Corby) protein is Glutaminase.